A 334-amino-acid chain; its full sequence is N-acetyl-gamma-glutamyl-phosphate reductase (334 aa).

The active site involves cysteine 154.

This sequence belongs to the NAGSA dehydrogenase family. Type 1 subfamily.

The protein resides in the cytoplasm. The enzyme catalyses N-acetyl-L-glutamate 5-semialdehyde + phosphate + NADP(+) = N-acetyl-L-glutamyl 5-phosphate + NADPH + H(+). It functions in the pathway amino-acid biosynthesis; L-arginine biosynthesis; N(2)-acetyl-L-ornithine from L-glutamate: step 3/4. Catalyzes the NADPH-dependent reduction of N-acetyl-5-glutamyl phosphate to yield N-acetyl-L-glutamate 5-semialdehyde. This Buchnera aphidicola subsp. Acyrthosiphon pisum (strain Tuc7) protein is N-acetyl-gamma-glutamyl-phosphate reductase.